We begin with the raw amino-acid sequence, 274 residues long: Serine/threonine-protein kinase 1 (274 aa).

Positions 16–273 constitute a Protein kinase domain; sequence AVLAPKVVNG…HSFLASRHDY (258 aa). ATP contacts are provided by residues 22 to 30 and Lys46; that span reads VVNGRFGKM. Asp134 functions as the Proton acceptor in the catalytic mechanism.

The protein belongs to the protein kinase superfamily. Ser/Thr protein kinase family.

The enzyme catalyses L-seryl-[protein] + ATP = O-phospho-L-seryl-[protein] + ADP + H(+). The catalysed reaction is L-threonyl-[protein] + ATP = O-phospho-L-threonyl-[protein] + ADP + H(+). The sequence is that of Serine/threonine-protein kinase 1 (PK1) from Orgyia pseudotsugata multicapsid polyhedrosis virus (OpMNPV).